The chain runs to 221 residues: Thiol:disulfide interchange protein TlpA (221 aa).

The Cytoplasmic portion of the chain corresponds to 1 to 11; the sequence is MLDTKPSATRR. A helical transmembrane segment spans residues 12–35; sequence IPLVIATVAVGGLAGFAALYGLGL. At 36–221 the chain is on the periplasmic side; it reads SRAPTGDPAC…AATGKAAAAL (186 aa). Disulfide bonds link C45-C190 and C107-C110. The 147-residue stretch at 69–215 folds into the Thioredoxin domain; it reads ASAPLKLPDL…ALKLIRAATG (147 aa).

It belongs to the thioredoxin family. As to quaternary structure, monomer.

The protein localises to the cell membrane. Involved in cytochrome aa3 assembly. This Bradyrhizobium diazoefficiens (strain JCM 10833 / BCRC 13528 / IAM 13628 / NBRC 14792 / USDA 110) protein is Thiol:disulfide interchange protein TlpA (tlpA).